Here is a 120-residue protein sequence, read N- to C-terminus: NAD(P)H-quinone oxidoreductase subunit 3 (120 aa).

3 helical membrane passes run 6–26, 64–84, and 89–109; these read GYDAFLGFLLISAAVPVLALV, MFALVFVIFDVETVFLYPWAV, and LGLLAFIEALIFIAILIVALA.

Belongs to the complex I subunit 3 family. In terms of assembly, NDH-1 can be composed of about 15 different subunits; different subcomplexes with different compositions have been identified which probably have different functions.

Its subcellular location is the cellular thylakoid membrane. It catalyses the reaction a plastoquinone + NADH + (n+1) H(+)(in) = a plastoquinol + NAD(+) + n H(+)(out). The catalysed reaction is a plastoquinone + NADPH + (n+1) H(+)(in) = a plastoquinol + NADP(+) + n H(+)(out). Functionally, NDH-1 shuttles electrons from an unknown electron donor, via FMN and iron-sulfur (Fe-S) centers, to quinones in the respiratory and/or the photosynthetic chain. The immediate electron acceptor for the enzyme in this species is believed to be plastoquinone. Couples the redox reaction to proton translocation, and thus conserves the redox energy in a proton gradient. Cyanobacterial NDH-1 also plays a role in inorganic carbon-concentration. The protein is NAD(P)H-quinone oxidoreductase subunit 3 of Prochlorococcus marinus (strain MIT 9211).